Here is a 105-residue protein sequence, read N- to C-terminus: Replication restart protein PriB (105 aa).

The SSB domain occupies 1–102 (MTANRLVLTG…LHAEQIELID (102 aa)).

It belongs to the PriB family. As to quaternary structure, homodimer. Interacts with PriA and DnaT. Component of the replication restart primosome. Primosome assembly occurs via a 'hand-off' mechanism. PriA binds to replication forks, subsequently PriB then DnaT bind; DnaT then displaces ssDNA to generate the helicase loading substrate.

In terms of biological role, involved in the restart of stalled replication forks, which reloads the replicative helicase on sites other than the origin of replication; the PriA-PriB pathway is the major replication restart pathway. During primosome assembly it facilitates complex formation between PriA and DnaT on DNA; stabilizes PriA on DNA. Stimulates the DNA unwinding activity of PriA helicase. This chain is Replication restart protein PriB, found in Proteus mirabilis (strain HI4320).